The chain runs to 83 residues: Large ribosomal subunit protein bL31B (83 aa).

Belongs to the bacterial ribosomal protein bL31 family. Type B subfamily. In terms of assembly, part of the 50S ribosomal subunit.

Binds the 23S rRNA. The protein is Large ribosomal subunit protein bL31B of Lactobacillus delbrueckii subsp. bulgaricus (strain ATCC 11842 / DSM 20081 / BCRC 10696 / JCM 1002 / NBRC 13953 / NCIMB 11778 / NCTC 12712 / WDCM 00102 / Lb 14).